We begin with the raw amino-acid sequence, 202 residues long: Superoxide dismutase [Mn] (202 aa).

Histidine 27, histidine 82, aspartate 164, and histidine 168 together coordinate Mn(2+).

Belongs to the iron/manganese superoxide dismutase family. Homodimer. The cofactor is Mn(2+).

It catalyses the reaction 2 superoxide + 2 H(+) = H2O2 + O2. Destroys superoxide anion radicals which are normally produced within the cells and which are toxic to biological systems. This chain is Superoxide dismutase [Mn] (sodA), found in Listeria ivanovii.